Consider the following 493-residue polypeptide: GTPase Der (493 aa).

Positions 3 to 166 (PVIALVGRPN…EALGIFPKDN (164 aa)) constitute an EngA-type G 1 domain. GTP-binding positions include 9–16 (GRPNVGKS), 56–60 (DTGGI), and 118–121 (NKVD). Residues 167–184 (VEEEGEGEPASEEVAEGE) show a composition bias toward acidic residues. The segment at 167–195 (VEEEGEGEPASEEVAEGEEPTRIPGPSEK) is disordered. Residues 198–371 (IKIAIIGRPN…SVQESFRSAV (174 aa)) enclose the EngA-type G 2 domain. GTP-binding positions include 204–211 (GRPNVGKS), 251–255 (DTAGV), and 316–319 (NKWD). The KH-like domain maps to 372-456 (TRWPTSRLTS…PIRIEYKGGE (85 aa)). A compositionally biased stretch (basic and acidic residues) spans 454-463 (GGENPYEGKK). The interval 454 to 493 (GGENPYEGKKNSLTARQVNKKRRLMSHHKKAEKKKKDKRR) is disordered. Residues 471-493 (VNKKRRLMSHHKKAEKKKKDKRR) are compositionally biased toward basic residues.

Belongs to the TRAFAC class TrmE-Era-EngA-EngB-Septin-like GTPase superfamily. EngA (Der) GTPase family. In terms of assembly, associates with the 50S ribosomal subunit.

Functionally, GTPase that plays an essential role in the late steps of ribosome biogenesis. In Pseudomonas aeruginosa (strain LESB58), this protein is GTPase Der.